The sequence spans 197 residues: Alkyl hydroperoxide reductase C (197 aa).

One can recognise a Thioredoxin domain in the interval 2–163; it reads VLVTQNAPNF…MIRMVDALDF (162 aa). Cys50 serves as the catalytic Cysteine sulfenic acid (-SOH) intermediate.

This sequence belongs to the peroxiredoxin family. AhpC/Prx1 subfamily. In terms of assembly, homodimer; disulfide-linked, upon oxidation. 5 homodimers assemble to form a ring-like decamer.

The protein resides in the cytoplasm. The catalysed reaction is a hydroperoxide + NADH + H(+) = an alcohol + NAD(+) + H2O. Its function is as follows. Thiol-specific peroxidase that catalyzes the reduction of hydrogen peroxide and organic hydroperoxides to water and alcohols, respectively. Plays a role in cell protection against oxidative stress by detoxifying peroxides. In Buchnera aphidicola subsp. Acyrthosiphon pisum (strain APS) (Acyrthosiphon pisum symbiotic bacterium), this protein is Alkyl hydroperoxide reductase C.